A 313-amino-acid polypeptide reads, in one-letter code: HPr kinase/phosphorylase (313 aa).

Active-site residues include His-140 and Lys-161. Residue 155-162 (GNSGAGKS) coordinates ATP. Ser-162 serves as a coordination point for Mg(2+). Asp-179 functions as the Proton acceptor; for phosphorylation activity. Proton donor; for dephosphorylation activity in the catalytic mechanism. Positions 203-212 (IEVRGLGILN) are important for the catalytic mechanism of both phosphorylation and dephosphorylation. Glu-204 contributes to the Mg(2+) binding site. Residue Arg-246 is part of the active site. Positions 267–272 (PVAAGR) are important for the catalytic mechanism of dephosphorylation.

This sequence belongs to the HPrK/P family. As to quaternary structure, homohexamer. The cofactor is Mg(2+).

The catalysed reaction is [HPr protein]-L-serine + ATP = [HPr protein]-O-phospho-L-serine + ADP + H(+). The enzyme catalyses [HPr protein]-O-phospho-L-serine + phosphate + H(+) = [HPr protein]-L-serine + diphosphate. Catalyzes the ATP- as well as the pyrophosphate-dependent phosphorylation of a specific serine residue in HPr, a phosphocarrier protein of the phosphoenolpyruvate-dependent sugar phosphotransferase system (PTS). HprK/P also catalyzes the pyrophosphate-producing, inorganic phosphate-dependent dephosphorylation (phosphorolysis) of seryl-phosphorylated HPr (P-Ser-HPr). In Azoarcus sp. (strain BH72), this protein is HPr kinase/phosphorylase.